Consider the following 568-residue polypeptide: Proline--tRNA ligase (568 aa).

The protein belongs to the class-II aminoacyl-tRNA synthetase family. ProS type 1 subfamily. As to quaternary structure, homodimer.

The protein localises to the cytoplasm. It catalyses the reaction tRNA(Pro) + L-proline + ATP = L-prolyl-tRNA(Pro) + AMP + diphosphate. In terms of biological role, catalyzes the attachment of proline to tRNA(Pro) in a two-step reaction: proline is first activated by ATP to form Pro-AMP and then transferred to the acceptor end of tRNA(Pro). As ProRS can inadvertently accommodate and process non-cognate amino acids such as alanine and cysteine, to avoid such errors it has two additional distinct editing activities against alanine. One activity is designated as 'pretransfer' editing and involves the tRNA(Pro)-independent hydrolysis of activated Ala-AMP. The other activity is designated 'posttransfer' editing and involves deacylation of mischarged Ala-tRNA(Pro). The misacylated Cys-tRNA(Pro) is not edited by ProRS. In Listeria monocytogenes serotype 4a (strain HCC23), this protein is Proline--tRNA ligase.